The chain runs to 136 residues: Small ribosomal subunit protein uS11 (136 aa).

The protein belongs to the universal ribosomal protein uS11 family. Part of the 30S ribosomal subunit. Interacts with proteins S7 and S18. Binds to IF-3.

Located on the platform of the 30S subunit, it bridges several disparate RNA helices of the 16S rRNA. Forms part of the Shine-Dalgarno cleft in the 70S ribosome. The polypeptide is Small ribosomal subunit protein uS11 (Leptospira borgpetersenii serovar Hardjo-bovis (strain JB197)).